A 255-amino-acid chain; its full sequence is DNA repair protein RecO (255 aa).

The protein belongs to the RecO family.

Its function is as follows. Involved in DNA repair and RecF pathway recombination. The protein is DNA repair protein RecO of Listeria welshimeri serovar 6b (strain ATCC 35897 / DSM 20650 / CCUG 15529 / CIP 8149 / NCTC 11857 / SLCC 5334 / V8).